Consider the following 489-residue polypeptide: Glutamate--tRNA ligase (489 aa).

The short motif at 11 to 21 (PSPTGHLHIGG) is the 'HIGH' region element. Cys-108, Cys-110, Cys-136, and His-138 together coordinate Zn(2+). The 'KMSKS' region signature appears at 253 to 257 (KLSKR). Position 256 (Lys-256) interacts with ATP.

Belongs to the class-I aminoacyl-tRNA synthetase family. Glutamate--tRNA ligase type 1 subfamily. As to quaternary structure, monomer. Zn(2+) serves as cofactor.

Its subcellular location is the cytoplasm. The enzyme catalyses tRNA(Glu) + L-glutamate + ATP = L-glutamyl-tRNA(Glu) + AMP + diphosphate. In terms of biological role, catalyzes the attachment of glutamate to tRNA(Glu) in a two-step reaction: glutamate is first activated by ATP to form Glu-AMP and then transferred to the acceptor end of tRNA(Glu). The protein is Glutamate--tRNA ligase of Geobacillus thermodenitrificans (strain NG80-2).